Here is a 571-residue protein sequence, read N- to C-terminus: Carboxylesterase 3 (571 aa).

The N-terminal stretch at 1 to 26 (MERAVRVESGVLVGVVCLLLACPATA) is a signal peptide. A disulfide bridge links C97 with C124. N105 carries an N-linked (GlcNAc...) asparagine glycan. The active-site Acyl-ester intermediate is the S229. The cysteines at positions 281 and 292 are disulfide-linked. Catalysis depends on charge relay system residues E347 and H460. Positions 568–571 (QEDL) match the Prevents secretion from ER motif.

This sequence belongs to the type-B carboxylesterase/lipase family. Post-translationally, N-glycosylated. In terms of tissue distribution, expressed in liver, colon and small intestine.

The protein resides in the endoplasmic reticulum lumen. The enzyme catalyses a carboxylic ester + H2O = an alcohol + a carboxylate + H(+). Its function is as follows. Involved in the detoxification of xenobiotics and in the activation of ester and amide prodrugs. Shows low catalytic efficiency for hydrolysis of CPT-11 (7-ethyl-10-[4-(1-piperidino)-1-piperidino]-carbonyloxycamptothecin), a prodrug for camptothecin used in cancer therapeutics. This Homo sapiens (Human) protein is Carboxylesterase 3 (CES3).